Consider the following 904-residue polypeptide: Toll-like receptor 3 (904 aa).

The signal sequence occupies residues 1–26 (MSRPLPYHIHFFSGLLTCWILCTSSA). Residues 27–52 (HKCTVRHEVADCSHLKLTQIPDDLPT) form the LRRNT domain. Residues 27–705 (HKCTVRHEVA…PCKDSAPFEL (679 aa)) are Lumenal-facing. Cys29 and Cys38 are oxidised to a cystine. Residues Asn53, Asn58, and Asn71 are each glycosylated (N-linked (GlcNAc...) asparagine). LRR repeat units lie at residues 53–74 (NITV…NFTR), 77–98 (QLTT…LCQS), 101–122 (WLEI…TFIF), 125–146 (NLTE…PFKN), 149–170 (NLIK…TQLQ), and 173–194 (NLQE…EFDF). Cys96 and Cys123 are joined by a disulfide. Asn125 carries an N-linked (GlcNAc...) asparagine glycan. The N-linked (GlcNAc...) asparagine glycan is linked to Asn197. LRR repeat units follow at residues 199 to 220 (SLKR…CFHT) and 223 to 245 (ELSG…LCLE). Asn248, Asn253, Asn276, and Asn292 each carry an N-linked (GlcNAc...) asparagine glycan. LRR repeat units follow at residues 250-271 (SIEN…TFDG), 276-297 (NLTT…SFAW), 300-321 (HLEY…SFYG), 324-345 (NLRR…TSLP), 357-378 (CLEY…TFTG), 381-401 (RLKF…TNET), 409-430 (PLLL…AFSW), 433-455 (HLEV…EWRG), 466-487 (YNKY…QRLM), 508-529 (NLVI…LLKG), 532-553 (KLEI…ANPG), 564-585 (HLHI…AFKD), 588-609 (ELKS…VFDN), and 612-633 (SLKS…VFGP). N-linked (GlcNAc...) asparagine glycosylation occurs at Asn399. N-linked (GlcNAc...) asparagine glycosylation is found at Asn637, Asn663, and Asn668. In terms of domain architecture, LRRCT spans 646-699 (NPFDCTCESIAWFVNWINITHTNISELSNHYLCNTPPQYHGYPVMLFDVSPCKD). Cystine bridges form between Cys650–Cys678 and Cys652–Cys697. The chain crosses the membrane as a helical span at residues 706–726 (LFMININILLIFIFIVLLIHF). The Cytoplasmic portion of the chain corresponds to 727 to 904 (EGWRISFYWN…VALGSRNSAH (178 aa)). The region spanning 754-897 (FEYAAYIIHA…AFHHKLKVAL (144 aa)) is the TIR domain. Tyr759 is subject to Phosphotyrosine. Glycyl lysine isopeptide (Lys-Gly) (interchain with G-Cter in ubiquitin) cross-links involve residues Lys765, Lys812, and Lys831. Tyr858 bears the Phosphotyrosine mark.

Belongs to the Toll-like receptor family. As to quaternary structure, monomer and homodimer; dimerization is triggered by ligand-binding, the signaling unit is composed of one ds-RNA of around 40 bp and two TLR3 molecules, and lateral clustering of signaling units along the length of the ds-RNA ligand is required for TLR3 signal transduction. Interacts (via transmembrane domain) with UNC93B1; the interaction is required for transport from the ER to the endosomes. Interacts with TICAM1 (via the TIR domain) in response to poly(I:C) and this interaction is enhanced in the presence of WDFY1. Interacts with SRC; upon binding of double-stranded RNA. The tyrosine-phosphorylated form (via TIR domain) interacts with WDFY1 (via WD repeat 2) in response to poly(I:C). Post-translationally, TLR3 signaling requires a proteolytic cleavage mediated by cathepsins CTSB and CTSH, the cleavage occurs between amino acids 252 and 346. The cleaved form of TLR3 is the predominant form found in endosomes. Ubiquitinated by TRIM3; leading to recognition and sorting of polyubiquitinated TLR3 by the ESCRT complexes. Ubiquitinated by ZNRF1 via 'Lys-63'-linked ubiquitin chains; leading to TLR3 lysosomal trafficking and degradation. Ubiquitinated by RNF170 at Lys-765 via 'Lys-48'-linked ubiquitin chains; leading to TLR3 proteasomal degradation.

It is found in the endoplasmic reticulum membrane. The protein resides in the endosome membrane. It localises to the early endosome. Functionally, key component of innate and adaptive immunity. TLRs (Toll-like receptors) control host immune response against pathogens through recognition of molecular patterns specific to microorganisms. TLR3 is a nucleotide-sensing TLR which is activated by double-stranded RNA, a sign of viral infection. Acts via the adapter TRIF/TICAM1, leading to NF-kappa-B activation, IRF3 nuclear translocation, cytokine secretion and the inflammatory response. The protein is Toll-like receptor 3 (TLR3) of Bos taurus (Bovine).